The sequence spans 209 residues: MVAQVKICGLNSAASVAASIAGGADYLGFVFFPPSPRAVTAQEAASLAAPIAQPLRKVGLFVNPRDGEIEAVLRELPLDIIQLHDVPVARALQLRERLALPVWRSVGIAAADDLPRDSGGVDALLLDAKPRPDAALPGGNGQAFDWSILADFAPSFAWILAGGLTPDTVADAVRRTGAPIVDVSSGVEQSRGRKDPALIRSFLSAVRNA.

This sequence belongs to the TrpF family.

It catalyses the reaction N-(5-phospho-beta-D-ribosyl)anthranilate = 1-(2-carboxyphenylamino)-1-deoxy-D-ribulose 5-phosphate. The protein operates within amino-acid biosynthesis; L-tryptophan biosynthesis; L-tryptophan from chorismate: step 3/5. This chain is N-(5'-phosphoribosyl)anthranilate isomerase, found in Granulibacter bethesdensis (strain ATCC BAA-1260 / CGDNIH1).